The primary structure comprises 577 residues: Protein GPR108 (577 aa).

Residues 1 to 34 form the signal peptide; that stretch reads MAVSERRGLSGESPAQCRWEYLSLLVLMLSGCSG. N-linked (GlcNAc...) asparagine glycosylation is found at N59 and N111. A disordered region spans residues 144–224; it reads LLPEAPSQSG…TRGPSGKEKD (81 aa). Residues N233 and N237 are each glycosylated (N-linked (GlcNAc...) asparagine). The next 7 membrane-spanning stretches (helical) occupy residues 296 to 316, 325 to 345, 369 to 389, 400 to 420, 434 to 454, 482 to 502, and 506 to 526; these read LYLI…SVLC, IHWL…FHSI, LLKG…WAFV, IFGI…VIES, ILFL…VWSI, VMVI…RVAV, and WQWL…VLTG.

It belongs to the LU7TM family.

The protein resides in the golgi apparatus. The protein localises to the cis-Golgi network membrane. It localises to the trans-Golgi network membrane. It is found in the golgi apparatus membrane. Its function is as follows. May play a role in intracellular immune modulation by activating NF-kappaB response and attenuating Toll-like-receptor response. The polypeptide is Protein GPR108 (Gpr108) (Rattus norvegicus (Rat)).